The sequence spans 624 residues: Chaperone protein HtpG (624 aa).

The interval 1-341 (MAVKQFKAES…SPDLSLNISR (341 aa)) is a; substrate-binding. Residues 342 to 550 (ELLQHDRQLK…DGELSIEMEK (209 aa)) are b. The c stretch occupies residues 551-624 (VLKMMPDNNN…FANDVASLMK (74 aa)).

The protein belongs to the heat shock protein 90 family. Homodimer.

Its subcellular location is the cytoplasm. Its function is as follows. Molecular chaperone. Has ATPase activity. The chain is Chaperone protein HtpG from Clostridium acetobutylicum (strain ATCC 824 / DSM 792 / JCM 1419 / IAM 19013 / LMG 5710 / NBRC 13948 / NRRL B-527 / VKM B-1787 / 2291 / W).